A 157-amino-acid polypeptide reads, in one-letter code: Transcription elongation factor GreA (157 aa).

Residues 17–37 adopt a coiled-coil conformation; sequence ELERLLKLRPQISEAIAEARE.

It belongs to the GreA/GreB family.

In terms of biological role, necessary for efficient RNA polymerase transcription elongation past template-encoded arresting sites. The arresting sites in DNA have the property of trapping a certain fraction of elongating RNA polymerases that pass through, resulting in locked ternary complexes. Cleavage of the nascent transcript by cleavage factors such as GreA or GreB allows the resumption of elongation from the new 3'terminus. GreA releases sequences of 2 to 3 nucleotides. The protein is Transcription elongation factor GreA of Vibrio parahaemolyticus serotype O3:K6 (strain RIMD 2210633).